The following is a 297-amino-acid chain: Calponin-1 (297 aa).

The Calponin-homology (CH) domain maps to 28–131 (HQREQELREW…STLLALASMA (104 aa)). Calponin-like repeat units lie at residues 164–189 (IGLQMGTNKFASQQGMTAYGTRRHLY), 204–229 (ISLQMGTNKGASQAGMTAPGTKRQIF), and 243–268 (VSLQMGSNKGASQRGMTVYGLPRQVY). Residue threonine 170 is modified to Phosphothreonine; by ROCK2. Serine 175 carries the post-translational modification Phosphoserine; by ROCK2. Threonine 180 and threonine 184 each carry phosphothreonine; by ROCK2. A Phosphothreonine; by ROCK2 modification is found at threonine 259.

Belongs to the calponin family. As to quaternary structure, part of cGMP kinase signaling complex at least composed of ACTA2/alpha-actin, CNN1/calponin H1, PLN/phospholamban, PRKG1 and ITPR1.

Its function is as follows. Thin filament-associated protein that is implicated in the regulation and modulation of smooth muscle contraction. It is capable of binding to actin, calmodulin and tropomyosin. The interaction of calponin with actin inhibits the actomyosin Mg-ATPase activity. This Ovis aries (Sheep) protein is Calponin-1 (CNN1).